We begin with the raw amino-acid sequence, 524 residues long: Acetyl-CoA decarbonylase/synthase complex subunit beta (524 aa).

[Ni-Fe-S] cluster is bound by residues Cys212, Cys215, Cys301, and Cys303. A disordered region spans residues 436-466 (WVEEEEEEAEEVAEEAAAEAAPAAQPAQAAQ). A compositionally biased stretch (acidic residues) spans 437–452 (VEEEEEEAEEVAEEAA). The span at 453–466 (AEAAPAAQPAQAAQ) shows a compositional bias: low complexity.

It belongs to the CdhC family. Monomer. The ACDS complex is made up of alpha, epsilon, beta, gamma and delta chains with a probable stoichiometry of (alpha(2)epsilon(2))(4)-beta(8)-(gamma(1)delta(1))(8). Requires [Ni-Fe-S] cluster as cofactor.

The enzyme catalyses Co(I)-[corrinoid Fe-S protein] + acetyl-CoA + H(+) = methyl-Co(III)-[corrinoid Fe-S protein] + CO + CoA. Functionally, part of a complex that catalyzes the reversible cleavage of acetyl-CoA, allowing autotrophic growth from CO(2). The alpha-epsilon complex generates CO from CO(2), while the beta subunit (this protein) combines the CO with CoA and a methyl group to form acetyl-CoA. The methyl group, which is incorporated into acetyl-CoA, is transferred to the beta subunit by a corrinoid iron-sulfur protein (the gamma-delta complex). The chain is Acetyl-CoA decarbonylase/synthase complex subunit beta from Archaeoglobus fulgidus (strain ATCC 49558 / DSM 4304 / JCM 9628 / NBRC 100126 / VC-16).